A 525-amino-acid polypeptide reads, in one-letter code: GMP synthase [glutamine-hydrolyzing] (525 aa).

The region spanning 9 to 207 (RILILDFGSQ…VRDICQCEAL (199 aa)) is the Glutamine amidotransferase type-1 domain. Cys86 acts as the Nucleophile in catalysis. Active-site residues include His181 and Glu183. A GMPS ATP-PPase domain is found at 208–400 (WTPAKIIDDA…LGLPYDMLYR (193 aa)). 235-241 (SGGVDSS) is an ATP binding site.

Homodimer.

The enzyme catalyses XMP + L-glutamine + ATP + H2O = GMP + L-glutamate + AMP + diphosphate + 2 H(+). It participates in purine metabolism; GMP biosynthesis; GMP from XMP (L-Gln route): step 1/1. Functionally, catalyzes the synthesis of GMP from XMP. In Escherichia coli O17:K52:H18 (strain UMN026 / ExPEC), this protein is GMP synthase [glutamine-hydrolyzing].